The chain runs to 176 residues: Isopentenyl-diphosphate Delta-isomerase (176 aa).

2 residues coordinate Mn(2+): histidine 24 and histidine 30. Residues 28-160 (LLHRAFSIFV…PSAFTVWFHC (133 aa)) form the Nudix hydrolase domain. Cysteine 65 is a catalytic residue. Mn(2+) is bound at residue histidine 67. Glutamate 85 lines the Mg(2+) pocket. Mn(2+)-binding residues include glutamate 110 and glutamate 112. Glutamate 112 is a catalytic residue.

It belongs to the IPP isomerase type 1 family. Mg(2+) serves as cofactor. Requires Mn(2+) as cofactor.

It is found in the cytoplasm. The enzyme catalyses isopentenyl diphosphate = dimethylallyl diphosphate. It functions in the pathway isoprenoid biosynthesis; dimethylallyl diphosphate biosynthesis; dimethylallyl diphosphate from isopentenyl diphosphate: step 1/1. Its function is as follows. Catalyzes the 1,3-allylic rearrangement of the homoallylic substrate isopentenyl (IPP) to its highly electrophilic allylic isomer, dimethylallyl diphosphate (DMAPP). In Burkholderia multivorans (strain ATCC 17616 / 249), this protein is Isopentenyl-diphosphate Delta-isomerase.